Consider the following 330-residue polypeptide: 4-epi-cubebol synthase ((2E,6E)-farnesyl diphosphate cyclizing) (330 aa).

Residues Asp-91 and Glu-96 each coordinate Mg(2+). Residues 91-96 carry the DDXXXE motif motif; sequence DDAFCE. Arg-184 lines the substrate pocket. Residues Asn-230 and Ser-234 each coordinate Mg(2+). Residue Lys-237 participates in substrate binding. Glu-238 contributes to the Mg(2+) binding site. 316-317 is a substrate binding site; it reads RY.

Belongs to the terpene synthase family. Requires Mg(2+) as cofactor.

The catalysed reaction is (2E,6E)-farnesyl diphosphate + H2O = 4-epi-cubebol + diphosphate. Its pathway is secondary metabolite biosynthesis; terpenoid biosynthesis. Functionally, catalyzes the conversion of (2E,6E)-farnesyl diphosphate (FPP) to yield the bicyclic sesquiterpenol 4-epi-cubebol via a 1,10-cyclization, which requires the abstraction of the pyrophosphate from FPP to yield a (E,E)-germacradienyl cation. The only accepted substrate is (2E,6E)-farnesyl diphosphate (FPP). The protein is 4-epi-cubebol synthase ((2E,6E)-farnesyl diphosphate cyclizing) of Streptosporangium roseum (strain ATCC 12428 / DSM 43021 / JCM 3005 / KCTC 9067 / NCIMB 10171 / NRRL 2505 / NI 9100).